Consider the following 301-residue polypeptide: Probable DNA-directed RNA polymerase III subunit rpc6 (301 aa).

Belongs to the eukaryotic RPC34/RPC39 RNA polymerase subunit family. In terms of assembly, component of the RNA polymerase III (Pol III) complex consisting of 17 subunits. Interacts with TFIIB.

The protein resides in the nucleus. DNA-dependent RNA polymerase catalyzes the transcription of DNA into RNA using the four ribonucleoside triphosphates as substrates. Specific peripheric component of RNA polymerase III which synthesizes small RNAs, such as 5S rRNA and tRNAs. The chain is Probable DNA-directed RNA polymerase III subunit rpc6 (rpc6) from Schizosaccharomyces pombe (strain 972 / ATCC 24843) (Fission yeast).